We begin with the raw amino-acid sequence, 791 residues long: uncharacterized protein (791 aa).

Residues 10 to 30 (LLTITIGAVAVSSILLGGIFY) form a helical membrane-spanning segment. Residues 56–76 (NLDYQKARPSIKDNNLKEIPK) are compositionally biased toward basic and acidic residues. Residues 56–175 (NLDYQKARPS…PQPQQIPNQS (120 aa)) form a disordered region. Positions 77–97 (PKPQPKPEPQPTPFPDPIPTP) are enriched in pro residues. The segment covering 98 to 124 (PKKEELKKPEIKPEEPKKPEIKPEPIP) has biased composition (basic and acidic residues). Residues 125–139 (KPKPQPIPQPTPPVE) are compositionally biased toward pro residues.

It to U.parvum UU044.

The protein resides in the membrane. This is an uncharacterized protein from Ureaplasma parvum serovar 3 (strain ATCC 700970).